A 280-amino-acid chain; its full sequence is 2-dehydro-3-deoxyphosphooctonate aldolase (280 aa).

It belongs to the KdsA family.

It is found in the cytoplasm. It carries out the reaction D-arabinose 5-phosphate + phosphoenolpyruvate + H2O = 3-deoxy-alpha-D-manno-2-octulosonate-8-phosphate + phosphate. It participates in carbohydrate biosynthesis; 3-deoxy-D-manno-octulosonate biosynthesis; 3-deoxy-D-manno-octulosonate from D-ribulose 5-phosphate: step 2/3. The protein operates within bacterial outer membrane biogenesis; lipopolysaccharide biosynthesis. The polypeptide is 2-dehydro-3-deoxyphosphooctonate aldolase (Nitrosococcus oceani (strain ATCC 19707 / BCRC 17464 / JCM 30415 / NCIMB 11848 / C-107)).